A 414-amino-acid chain; its full sequence is Tryptophan synthase beta chain (414 aa).

Basic and acidic residues predominate over residues 1–12 (MVSTISRHDQNK). Residues 1-23 (MVSTISRHDQNKNNDYLNQPSKE) form a disordered region. Lys-109 bears the N6-(pyridoxal phosphate)lysine mark.

This sequence belongs to the TrpB family. In terms of assembly, tetramer of two alpha and two beta chains. Pyridoxal 5'-phosphate serves as cofactor.

The catalysed reaction is (1S,2R)-1-C-(indol-3-yl)glycerol 3-phosphate + L-serine = D-glyceraldehyde 3-phosphate + L-tryptophan + H2O. The protein operates within amino-acid biosynthesis; L-tryptophan biosynthesis; L-tryptophan from chorismate: step 5/5. Its function is as follows. The beta subunit is responsible for the synthesis of L-tryptophan from indole and L-serine. In Prochlorococcus marinus (strain MIT 9515), this protein is Tryptophan synthase beta chain.